A 541-amino-acid polypeptide reads, in one-letter code: Peptidyl-prolyl isomerase cwc-27 (541 aa).

Positions 11–193 (PTASAIIHTT…YPIKITRIEI (183 aa)) constitute a PPIase cyclophilin-type domain. Disordered regions lie at residues 199-443 (DDMQ…GQAD) and 513-541 (TLKE…RDRH). Basic and acidic residues-rich tracts occupy residues 279–307 (AKRD…ESRR), 316–348 (QKKE…KTNE), and 361–374 (IHSE…KKSA). Acidic residues predominate over residues 432–442 (DVEDGEQDGQA). Basic and acidic residues-rich tracts occupy residues 513 to 525 (TLKE…RDAK) and 532 to 541 (AWDRGRRDRH).

This sequence belongs to the cyclophilin-type PPIase family. CWC27 subfamily. Associated with the spliceosome.

Its subcellular location is the cytoplasm. The protein localises to the nucleus. It carries out the reaction [protein]-peptidylproline (omega=180) = [protein]-peptidylproline (omega=0). In terms of biological role, PPIases accelerate the folding of proteins. It catalyzes the cis-trans isomerization of proline imidic peptide bonds in oligopeptides. Involved in pre-mRNA splicing. This chain is Peptidyl-prolyl isomerase cwc-27 (cwc-27), found in Neurospora crassa (strain ATCC 24698 / 74-OR23-1A / CBS 708.71 / DSM 1257 / FGSC 987).